Here is a 305-residue protein sequence, read N- to C-terminus: Tyrosine recombinase XerC (305 aa).

The Core-binding (CB) domain occupies 1 to 93 (MVLDGFAAYF…AWRQYCAWLV (93 aa)). The 181-residue stretch at 114 to 294 (RVPKALPQEW…DFDHIARLYD (181 aa)) folds into the Tyr recombinase domain. Catalysis depends on residues arginine 155, lysine 179, histidine 246, arginine 249, and histidine 272. Tyrosine 281 serves as the catalytic O-(3'-phospho-DNA)-tyrosine intermediate.

It belongs to the 'phage' integrase family. XerC subfamily. Forms a cyclic heterotetrameric complex composed of two molecules of XerC and two molecules of XerD.

The protein localises to the cytoplasm. Its function is as follows. Site-specific tyrosine recombinase, which acts by catalyzing the cutting and rejoining of the recombining DNA molecules. The XerC-XerD complex is essential to convert dimers of the bacterial chromosome into monomers to permit their segregation at cell division. It also contributes to the segregational stability of plasmids. This chain is Tyrosine recombinase XerC, found in Neisseria gonorrhoeae (strain ATCC 700825 / FA 1090).